We begin with the raw amino-acid sequence, 121 residues long: ATP synthase epsilon chain (121 aa).

Belongs to the ATPase epsilon chain family. F-type ATPases have 2 components, CF(1) - the catalytic core - and CF(0) - the membrane proton channel. CF(1) has five subunits: alpha(3), beta(3), gamma(1), delta(1), epsilon(1). CF(0) has three main subunits: a, b and c.

The protein resides in the cell membrane. Functionally, produces ATP from ADP in the presence of a proton gradient across the membrane. The chain is ATP synthase epsilon chain from Mycobacterium avium (strain 104).